The primary structure comprises 834 residues: Serine-rich coiled-coil domain-containing protein 2 (834 aa).

The interval 169–212 is disordered; it reads PKSQLNGFYGNRSAGSMQRPRANSCATRSSSGESLAQSPDSSKS. The span at 192 to 212 shows a compositional bias: polar residues; it reads SCATRSSSGESLAQSPDSSKS. Phosphoserine is present on Ser223. The span at 426-443 shows a compositional bias: basic and acidic residues; that stretch reads RTRITPEEMSLKEEKHEN. Disordered regions lie at residues 426-454, 477-509, 573-628, 695-714, and 780-834; these read RTRI…DSPK, CTKH…SSDG, NMNR…SPYR, LHDI…GDKV, and APSF…RGPQ. Ser452 carries the phosphoserine modification. The span at 497–507 shows a compositional bias: low complexity; sequence SSFELSPSDSS. Composition is skewed to basic and acidic residues over residues 573–584 and 601–611; these read NMNRFDRPDRNV and GQEHYHLSHPD. The stretch at 712-749 forms a coiled coil; it reads DKVYKNEDLLNEIKQLKDEIKKKDEKIQLLELQLATQH. Composition is skewed to polar residues over residues 781–790 and 804–816; these read PSFSPWQGSF and TSST…PSQT.

It belongs to the CCSER family.

It is found in the cytoplasm. Its subcellular location is the cytoskeleton. Its function is as follows. Microtubule-binding protein which might play a role in microtubule bundling. The polypeptide is Serine-rich coiled-coil domain-containing protein 2 (CCSER2) (Homo sapiens (Human)).